We begin with the raw amino-acid sequence, 394 residues long: Na(+)/H(+) antiporter NhaA (394 aa).

Helical transmembrane passes span Ala-14–Leu-34, Leu-59–Val-79, Val-95–Phe-115, Gly-125–Gly-145, Val-154–Phe-174, Val-179–Trp-199, Leu-213–Val-233, Gly-254–Val-274, Ile-292–Val-312, Ile-328–Leu-348, and Leu-363–Val-383.

This sequence belongs to the NhaA Na(+)/H(+) (TC 2.A.33) antiporter family.

Its subcellular location is the cell inner membrane. It catalyses the reaction Na(+)(in) + 2 H(+)(out) = Na(+)(out) + 2 H(+)(in). In terms of biological role, na(+)/H(+) antiporter that extrudes sodium in exchange for external protons. This Yersinia pestis bv. Antiqua (strain Angola) protein is Na(+)/H(+) antiporter NhaA.